A 71-amino-acid polypeptide reads, in one-letter code: Small ribosomal subunit protein bS18 (71 aa).

The protein belongs to the bacterial ribosomal protein bS18 family. In terms of assembly, part of the 30S ribosomal subunit. Forms a tight heterodimer with protein bS6.

In terms of biological role, binds as a heterodimer with protein bS6 to the central domain of the 16S rRNA, where it helps stabilize the platform of the 30S subunit. The sequence is that of Small ribosomal subunit protein bS18 from Synechococcus elongatus (strain ATCC 33912 / PCC 7942 / FACHB-805) (Anacystis nidulans R2).